The primary structure comprises 196 residues: Mpv17-like protein (196 aa).

Residues 1 to 16 (MAGWWPALSRAARRHP) are Cytoplasmic-facing. Residues 16 to 55 (PWPTNVLLYGSLVSAGDALQQRLQGREANWRQTRRVATLV) form a targeting to peroxisomes region. Residues 17-34 (WPTNVLLYGSLVSAGDAL) form a helical membrane-spanning segment. At 35-50 (QQRLQGREANWRQTRR) the chain is on the lumenal side. A helical transmembrane segment spans residues 51-67 (VATLVVTFHANFNYVWL). The Cytoplasmic segment spans residues 68–90 (RLLERALPGRAPHALLAKLLCDQ). The helical transmembrane segment at 91 to 108 (VVGAPIAVSAFYVGMSIL) threads the bilayer. Residues 109–150 (QGKDDIFLDLKQKFWNTYLSGLMYWPFVQLTNFSLVPVQWRT) lie on the Lumenal side of the membrane. A helical membrane pass occupies residues 151-167 (AYAGVCGFLWATFICFS). Residues 168 to 196 (QQSGDGTFKSAFTILYTKGTSATEGYPKK) lie on the Cytoplasmic side of the membrane.

The protein belongs to the peroxisomal membrane protein PXMP2/4 family. In terms of tissue distribution, isoform 1 is detected in the kidney (at protein level). Isoform 1 and isoform 2 are expressed in the kidney, heart, liver, lung, pancreas and skeletal muscle.

Its subcellular location is the peroxisome membrane. In terms of biological role, participates in reactive oxygen species metabolism by up- or down-regulation of the genes of antioxidant enzymes. Protective against the mitochondrial apoptotic cascade. The polypeptide is Mpv17-like protein (MPV17L) (Homo sapiens (Human)).